The sequence spans 152 residues: MSELEIRSNFRWPSCALSNFAQWPFVMDGIQFGGLEGFLQGCKVKNVEQQRRIFGLSGLAAQQAGRSYARAQDRGTLFWLGVPFSRYSPAWKELYTNAYFEAAIQNKGFRDALQASKGKVLKHSIASGLTKDDTILTEAEFIDVLNLLRDSL.

This is an uncharacterized protein from Escherichia coli (Bacteriophage T4).